We begin with the raw amino-acid sequence, 247 residues long: 6-phosphogluconolactonase (247 aa).

The protein belongs to the glucosamine/galactosamine-6-phosphate isomerase family. 6-phosphogluconolactonase subfamily.

It carries out the reaction 6-phospho-D-glucono-1,5-lactone + H2O = 6-phospho-D-gluconate + H(+). Its pathway is carbohydrate degradation; pentose phosphate pathway; D-ribulose 5-phosphate from D-glucose 6-phosphate (oxidative stage): step 2/3. In terms of biological role, hydrolysis of 6-phosphogluconolactone to 6-phosphogluconate. The sequence is that of 6-phosphogluconolactonase (pgl) from Mycobacterium bovis (strain ATCC BAA-935 / AF2122/97).